Reading from the N-terminus, the 362-residue chain is 3-dehydroquinate synthase (362 aa).

Residues 70 to 75 (DGESYK), 104 to 108 (GVVGD), 128 to 129 (TT), lysine 141, and lysine 150 each bind NAD(+). Glutamate 183, histidine 246, and histidine 263 together coordinate Zn(2+).

This sequence belongs to the sugar phosphate cyclases superfamily. Dehydroquinate synthase family. Co(2+) is required as a cofactor. Zn(2+) serves as cofactor. Requires NAD(+) as cofactor.

It is found in the cytoplasm. The enzyme catalyses 7-phospho-2-dehydro-3-deoxy-D-arabino-heptonate = 3-dehydroquinate + phosphate. Its pathway is metabolic intermediate biosynthesis; chorismate biosynthesis; chorismate from D-erythrose 4-phosphate and phosphoenolpyruvate: step 2/7. Its function is as follows. Catalyzes the conversion of 3-deoxy-D-arabino-heptulosonate 7-phosphate (DAHP) to dehydroquinate (DHQ). In Saccharophagus degradans (strain 2-40 / ATCC 43961 / DSM 17024), this protein is 3-dehydroquinate synthase.